Here is a 195-residue protein sequence, read N- to C-terminus: Large ribosomal subunit protein bL17 (195 aa).

The interval 125 to 195 is disordered; sequence ANRARRVGAS…PTQDSDADKS (71 aa). Positions 136 to 152 are enriched in low complexity; the sequence is QTAPVAAAAAPQAAVEP. 2 stretches are compositionally biased toward acidic residues: residues 153–173 and 183–195; these read EATE…EDTT and TDDP…ADKS.

The protein belongs to the bacterial ribosomal protein bL17 family. Part of the 50S ribosomal subunit. Contacts protein L32.

The chain is Large ribosomal subunit protein bL17 from Mycobacterium sp. (strain JLS).